A 201-amino-acid polypeptide reads, in one-letter code: Auxin-binding protein 1 (201 aa).

An N-terminal signal peptide occupies residues 1-38; sequence MAPDLSELAAAAAARGAYLAGVGVAVLLAASFLPVAES. A disulfide bridge links C40 with C193. Positions 95, 97, and 101 each coordinate Zn(2+). The N-linked (GlcNAc...) asparagine glycan is linked to N133. H144 contributes to the Zn(2+) binding site. The Prevents secretion from ER motif lies at 198–201; the sequence is KDEL.

As to quaternary structure, homodimer. Post-translationally, glycosylated. In terms of tissue distribution, expressed in roots, coleoptiles, leaves, stems, tassels and ears.

It is found in the endoplasmic reticulum lumen. Its function is as follows. Receptor for the plant hormone auxin. This is Auxin-binding protein 1 from Zea mays (Maize).